The primary structure comprises 239 residues: Ribosomal RNA large subunit methyltransferase E (239 aa).

A disordered region spans residues 1–20 (MTKAPIAGNRTGRKLGQRVK). Basic residues predominate over residues 11 to 20 (TGRKLGQRVK). 5 residues coordinate S-adenosyl-L-methionine: glycine 81, tryptophan 83, aspartate 104, aspartate 120, and aspartate 144. Lysine 184 functions as the Proton acceptor in the catalytic mechanism.

This sequence belongs to the class I-like SAM-binding methyltransferase superfamily. RNA methyltransferase RlmE family.

It localises to the cytoplasm. It carries out the reaction uridine(2552) in 23S rRNA + S-adenosyl-L-methionine = 2'-O-methyluridine(2552) in 23S rRNA + S-adenosyl-L-homocysteine + H(+). Specifically methylates the uridine in position 2552 of 23S rRNA at the 2'-O position of the ribose in the fully assembled 50S ribosomal subunit. This is Ribosomal RNA large subunit methyltransferase E from Rhizobium etli (strain ATCC 51251 / DSM 11541 / JCM 21823 / NBRC 15573 / CFN 42).